The primary structure comprises 194 residues: dITP/XTP pyrophosphatase (194 aa).

9–14 (THNPGK) provides a ligand contact to substrate. Asp-40 and Asp-69 together coordinate Mg(2+). The Proton acceptor role is filled by Asp-69. Substrate contacts are provided by residues Ser-70, 152–155 (FGYD), Lys-175, and 180–181 (HR).

This sequence belongs to the HAM1 NTPase family. As to quaternary structure, homodimer. Mg(2+) serves as cofactor.

The enzyme catalyses XTP + H2O = XMP + diphosphate + H(+). The catalysed reaction is dITP + H2O = dIMP + diphosphate + H(+). It catalyses the reaction ITP + H2O = IMP + diphosphate + H(+). In terms of biological role, pyrophosphatase that catalyzes the hydrolysis of nucleoside triphosphates to their monophosphate derivatives, with a high preference for the non-canonical purine nucleotides XTP (xanthosine triphosphate), dITP (deoxyinosine triphosphate) and ITP. Seems to function as a house-cleaning enzyme that removes non-canonical purine nucleotides from the nucleotide pool, thus preventing their incorporation into DNA/RNA and avoiding chromosomal lesions. The polypeptide is dITP/XTP pyrophosphatase (Caulobacter vibrioides (strain ATCC 19089 / CIP 103742 / CB 15) (Caulobacter crescentus)).